A 307-amino-acid chain; its full sequence is Elongation factor Ts (307 aa).

An involved in Mg(2+) ion dislocation from EF-Tu region spans residues 80–83; that stretch reads TDFV.

The protein belongs to the EF-Ts family.

Its subcellular location is the cytoplasm. Functionally, associates with the EF-Tu.GDP complex and induces the exchange of GDP to GTP. It remains bound to the aminoacyl-tRNA.EF-Tu.GTP complex up to the GTP hydrolysis stage on the ribosome. The protein is Elongation factor Ts of Bradyrhizobium diazoefficiens (strain JCM 10833 / BCRC 13528 / IAM 13628 / NBRC 14792 / USDA 110).